The primary structure comprises 182 residues: Acireductone dioxygenase (182 aa).

Residues H100, H102, E106, and H145 each contribute to the Fe(2+) site. The Ni(2+) site is built by H100, H102, E106, and H145.

The protein belongs to the acireductone dioxygenase (ARD) family. Monomer. Fe(2+) is required as a cofactor. Ni(2+) serves as cofactor.

The enzyme catalyses 1,2-dihydroxy-5-(methylsulfanyl)pent-1-en-3-one + O2 = 3-(methylsulfanyl)propanoate + CO + formate + 2 H(+). It catalyses the reaction 1,2-dihydroxy-5-(methylsulfanyl)pent-1-en-3-one + O2 = 4-methylsulfanyl-2-oxobutanoate + formate + 2 H(+). The protein operates within amino-acid biosynthesis; L-methionine biosynthesis via salvage pathway; L-methionine from S-methyl-5-thio-alpha-D-ribose 1-phosphate: step 5/6. In terms of biological role, catalyzes 2 different reactions between oxygen and the acireductone 1,2-dihydroxy-3-keto-5-methylthiopentene (DHK-MTPene) depending upon the metal bound in the active site. Fe-containing acireductone dioxygenase (Fe-ARD) produces formate and 2-keto-4-methylthiobutyrate (KMTB), the alpha-ketoacid precursor of methionine in the methionine recycle pathway. Ni-containing acireductone dioxygenase (Ni-ARD) produces methylthiopropionate, carbon monoxide and formate, and does not lie on the methionine recycle pathway. This Trichormus variabilis (strain ATCC 29413 / PCC 7937) (Anabaena variabilis) protein is Acireductone dioxygenase.